A 380-amino-acid polypeptide reads, in one-letter code: Cytochrome b (380 aa).

Transmembrane regions (helical) follow at residues Phe-34 to Met-54, Trp-78 to Ile-99, Trp-114 to Leu-134, and Phe-179 to Thr-199. Residues His-84 and His-98 each coordinate heme b. The heme b site is built by His-183 and His-197. His-202 is a binding site for a ubiquinone. The next 4 membrane-spanning stretches (helical) occupy residues Leu-227–Thr-247, Leu-289–His-309, Leu-321–Ser-341, and Phe-348–Pro-368.

Belongs to the cytochrome b family. As to quaternary structure, the cytochrome bc1 complex contains 11 subunits: 3 respiratory subunits (MT-CYB, CYC1 and UQCRFS1), 2 core proteins (UQCRC1 and UQCRC2) and 6 low-molecular weight proteins (UQCRH/QCR6, UQCRB/QCR7, UQCRQ/QCR8, UQCR10/QCR9, UQCR11/QCR10 and a cleavage product of UQCRFS1). This cytochrome bc1 complex then forms a dimer. Requires heme b as cofactor.

The protein resides in the mitochondrion inner membrane. Its function is as follows. Component of the ubiquinol-cytochrome c reductase complex (complex III or cytochrome b-c1 complex) that is part of the mitochondrial respiratory chain. The b-c1 complex mediates electron transfer from ubiquinol to cytochrome c. Contributes to the generation of a proton gradient across the mitochondrial membrane that is then used for ATP synthesis. This chain is Cytochrome b (MT-CYB), found in Herpetotheres cachinnans (Laughing falcon).